The primary structure comprises 907 residues: Protein translocase subunit SecA (907 aa).

ATP is bound by residues Q87, 105-109 (GEGKT), and D512. The segment at 862–885 (AENQLDDGHSSDQNHSPMVRDERK) is disordered. Residues 867-885 (DDGHSSDQNHSPMVRDERK) are compositionally biased toward basic and acidic residues. Positions 892, 894, 903, and 904 each coordinate Zn(2+).

It belongs to the SecA family. In terms of assembly, monomer and homodimer. Part of the essential Sec protein translocation apparatus which comprises SecA, SecYEG and auxiliary proteins SecDF-YajC and YidC. The cofactor is Zn(2+).

It is found in the cell inner membrane. It localises to the cytoplasm. The enzyme catalyses ATP + H2O + cellular proteinSide 1 = ADP + phosphate + cellular proteinSide 2.. In terms of biological role, part of the Sec protein translocase complex. Interacts with the SecYEG preprotein conducting channel. Has a central role in coupling the hydrolysis of ATP to the transfer of proteins into and across the cell membrane, serving both as a receptor for the preprotein-SecB complex and as an ATP-driven molecular motor driving the stepwise translocation of polypeptide chains across the membrane. This is Protein translocase subunit SecA from Aliivibrio salmonicida (strain LFI1238) (Vibrio salmonicida (strain LFI1238)).